A 213-amino-acid polypeptide reads, in one-letter code: Ribonuclease HII (213 aa).

Residues 18 to 213 (GLHAGVDEVG…RPVKERLAKR (196 aa)) form the RNase H type-2 domain. 3 residues coordinate a divalent metal cation: Asp-24, Glu-25, and Asp-116.

The protein belongs to the RNase HII family. Mn(2+) is required as a cofactor. Mg(2+) serves as cofactor.

The protein localises to the cytoplasm. It catalyses the reaction Endonucleolytic cleavage to 5'-phosphomonoester.. Its function is as follows. Endonuclease that specifically degrades the RNA of RNA-DNA hybrids. The chain is Ribonuclease HII from Shewanella woodyi (strain ATCC 51908 / MS32).